A 154-amino-acid polypeptide reads, in one-letter code: Spermatogenesis-associated protein 19, mitochondrial (154 aa).

The transit peptide at Met1–Val24 directs the protein to the mitochondrion. A phosphoserine mark is found at Ser26 and Ser116.

In terms of tissue distribution, expressed in the testis.

It localises to the mitochondrion outer membrane. Its subcellular location is the mitochondrion. It is found in the cell projection. The protein localises to the cilium. The protein resides in the flagellum. Essential for sperm motility and male fertility. Plays an important role in sperm motility by regulating the organization and function of the mitochondria and is also required for correct sperm midpiece assembly. The polypeptide is Spermatogenesis-associated protein 19, mitochondrial (Spata19) (Rattus norvegicus (Rat)).